We begin with the raw amino-acid sequence, 470 residues long: Uronate isomerase (470 aa).

Belongs to the metallo-dependent hydrolases superfamily. Uronate isomerase family.

The catalysed reaction is D-glucuronate = D-fructuronate. The enzyme catalyses aldehydo-D-galacturonate = keto-D-tagaturonate. It functions in the pathway carbohydrate metabolism; pentose and glucuronate interconversion. The sequence is that of Uronate isomerase from Escherichia coli O157:H7 (strain EC4115 / EHEC).